Reading from the N-terminus, the 61-residue chain is Mu-diguetoxin-Dc1c (61 aa).

Intrachain disulfides connect Cys-12/Cys-25, Cys-19/Cys-39, and Cys-24/Cys-53.

Belongs to the neurotoxin 26 (DTX) family. As to expression, expressed by the venom gland.

The protein localises to the secreted. Acts by delaying the inactivation of presynaptic voltage-sensitive sodium channels (Nav). Acts against insects and causes a progressive spastic paralysis. The chain is Mu-diguetoxin-Dc1c from Diguetia canities (Desert bush spider).